The sequence spans 352 residues: Probable RNA methyltransferase CV_2253 (352 aa).

Glu91 serves as the catalytic Proton acceptor. The region spanning 94–320 is the Radical SAM core domain; sequence LLPRDGLCVS…TKVRDSAGQD (227 aa). Cys101 and Cys325 form a disulfide bridge. Cys108, Cys112, and Cys115 together coordinate [4Fe-4S] cluster. S-adenosyl-L-methionine is bound by residues 153-154, Ser183, 206-208, and Asn282; these read GE and SLH. Cys325 serves as the catalytic S-methylcysteine intermediate.

Belongs to the radical SAM superfamily. RlmN family. Requires [4Fe-4S] cluster as cofactor.

It is found in the cytoplasm. This chain is Probable RNA methyltransferase CV_2253, found in Chromobacterium violaceum (strain ATCC 12472 / DSM 30191 / JCM 1249 / CCUG 213 / NBRC 12614 / NCIMB 9131 / NCTC 9757 / MK).